The following is a 449-amino-acid chain: D-inositol 3-phosphate glycosyltransferase (449 aa).

A 1D-myo-inositol 3-phosphate-binding site is contributed by His-43. UDP-N-acetyl-alpha-D-glucosamine contacts are provided by residues 49 to 50 (QP) and Gly-57. Residues 54-59 (DAGGMN), Lys-112, Tyr-145, Thr-169, and Arg-189 each bind 1D-myo-inositol 3-phosphate. Residues Arg-263, Lys-268, and Gln-324 each coordinate UDP-N-acetyl-alpha-D-glucosamine. 3 residues coordinate Mg(2+): Tyr-333, Arg-334, and Ala-336. UDP-N-acetyl-alpha-D-glucosamine contacts are provided by Glu-346 and Glu-354. Mg(2+) is bound at residue Thr-360.

The protein belongs to the glycosyltransferase group 1 family. MshA subfamily. Homodimer.

It catalyses the reaction 1D-myo-inositol 3-phosphate + UDP-N-acetyl-alpha-D-glucosamine = 1D-myo-inositol 2-acetamido-2-deoxy-alpha-D-glucopyranoside 3-phosphate + UDP + H(+). Functionally, catalyzes the transfer of a N-acetyl-glucosamine moiety to 1D-myo-inositol 3-phosphate to produce 1D-myo-inositol 2-acetamido-2-deoxy-glucopyranoside 3-phosphate in the mycothiol biosynthesis pathway. This Segniliparus rotundus (strain ATCC BAA-972 / CDC 1076 / CIP 108378 / DSM 44985 / JCM 13578) protein is D-inositol 3-phosphate glycosyltransferase.